An 814-amino-acid polypeptide reads, in one-letter code: MSYSPLLGADRRAGEPSSGLASSTSIRDTLSGALNSTKAYLQPFTPASPYLGSNGVNGHNEPSRLLSDVAPQLMTTRMMAAVTNSNTALGLTPDGQRRARLLLTPGFSITSPARSLVRIGGSLIQSGIGRGPMNGITSNELFVLEESDRILATAARDLDLEANADAQLGARSAIEASKSKAAEPSVSLLRGFQATIPSSTEGRQRRRRVRALASGFEDGPEGPTKLGLKAMGDKARGLMVEGVDAEPVSAFQAREQRHARRNQASRILSRAKEGSRSSAIQLEELERQLREIEREQGDVGVRRSLIDSEMAAVDDKIKVLENIKAGLHKKLLGLREEELELNDEHEGVGELLAVQKHLRAMPGGPAAAANAAASGGATTSQGSSRRRKGPLFMPSEHDELPSGVAFMTLADHSAPITSLDFTEPYGTLVSASLDETVRVWDLASGEEVGRLRGHVGTVKCLQVEDEVCITGGSDHSIRIWDLTKVENFEARLTMTASGELRARRRSPDLNRSPPPVADESMDSIKIRDGDTTAGDGDEEEVRDEFDPCVKRLEGHSKSVTSLYFDDNCLVTGASDKTLRQWDLNTGQCVLTMDILWAISNPTSSQAISQSEFGFPESPSRKASSSSILGATRPDLSSRDSFSVLNNLSGAFSYPTPPYADGSWEMYQDFVGGVQFWGYALASGSGDGGVRMWDMRTGQAHRTLLGHTAPVTCLQFDEHHIISGSLDKSIRIWDLRMGSISDTVRYEHPVTALQFDSRKILAATGENGVKLFNRTTLQHGSLTLNGHTSPVERLRYMDRYAVSGGKDCVVKIWAL.

The segment at 1 to 24 (MSYSPLLGADRRAGEPSSGLASST) is disordered. Positions 270-303 (RAKEGSRSSAIQLEELERQLREIEREQGDVGVRR) form a coiled coil. The span at 365-383 (PAAAANAAASGGATTSQGS) shows a compositional bias: low complexity. Residues 365-394 (PAAAANAAASGGATTSQGSSRRRKGPLFMP) form a disordered region. WD repeat units lie at residues 411–450 (DHSA…EVGR) and 453–490 (GHVG…NFEA). A disordered region spans residues 499–542 (ELRARRRSPDLNRSPPPVADESMDSIKIRDGDTTAGDGDEEEVR). One copy of the WD 3 repeat lies at 554–591 (GHSKSVTSLYFDDNCLVTGASDKTLRQWDLNTGQCVLT). The segment at 608–631 (SQSEFGFPESPSRKASSSSILGAT) is disordered. WD repeat units lie at residues 659–702 (ADGS…AHRT), 705–742 (GHTA…ISDT), 744–781 (RYEH…HGSL), and 785–814 (GHTS…IWAL).

This sequence belongs to the WD repeat MDV1/CAF4 family.

Its subcellular location is the mitochondrion outer membrane. Its function is as follows. Involved in mitochondrial fission. Acts as an adapter protein required to form mitochondrial fission complexes. Formation of these complexes is required to promote constriction and fission of the mitochondrial compartment at a late step in mitochondrial division. The protein is Mitochondrial division protein 1 (MDV1) of Mycosarcoma maydis (Corn smut fungus).